A 240-amino-acid chain; its full sequence is Inhibitor of growth protein 5 (240 aa).

N6-acetyllysine is present on lysine 114. The interval glutamate 116–threonine 165 is disordered. Position 118 is a phosphoserine (serine 118). The residue at position 126 (arginine 126) is an Omega-N-methylarginine. A PHD-type zinc finger spans residues proline 186–glutamate 235. Residues cysteine 189, cysteine 191, cysteine 202, cysteine 207, histidine 213, cysteine 216, cysteine 229, and cysteine 232 each coordinate Zn(2+).

It belongs to the ING family. Component of the HBO1 complex composed of KAT7/HBO1, MEAF6, ING5, and one scaffold subunit: complexes containing BRPF scaffold (BRPF1, BRD1/BRPF2 or BRPF3) direct KAT7/HBO1 specificity towards H3K14ac, while complexes containing JADE scaffold (JADE1, JADE2 and JADE3) mediate acetylation of histone H4. Component of the MOZ/MORF complex composed at least of ING5, KAT6A, KAT6B, MEAF6 and one of BRPF1, BRD1/BRPF2 and BRPF3. Interacts with H3K4me3 and to a lesser extent with H3K4me2. Interacts with EP300 and p53/TP53. Interacts with INCA1. As to expression, down-regulated in bone marrow cells in acute myeloid leukemia patients as compared with normal bone marrow cells.

The protein resides in the nucleus. It is found in the chromosome. In terms of biological role, component of the HBO1 complex, which specifically mediates acetylation of histone H3 at 'Lys-14' (H3K14ac) and, to a lower extent, acetylation of histone H4. Component of the MOZ/MORF complex which has a histone H3 acetyltransferase activity. Through chromatin acetylation it may regulate DNA replication and may function as a transcriptional coactivator. Inhibits cell growth, induces a delay in S-phase progression and enhances Fas-induced apoptosis in an INCA1-dependent manner. This is Inhibitor of growth protein 5 (ING5) from Homo sapiens (Human).